The primary structure comprises 937 residues: Periplasmic nitrate reductase (937 aa).

A signal peptide (tat-type signal) is located at residues 1 to 31 (MSMNRREFLKTTAAAAAASAVGISIPSEAKA). Residues 40 to 96 (WQWDKAVCRFCGTGCGIMVAVKDDKIVAVKGDPESPVNRGINCIKGYFNAKIMYGAD) enclose the 4Fe-4S Mo/W bis-MGD-type domain. Positions 47, 50, 54, and 82 each coordinate [4Fe-4S] cluster. Residues Lys84, Gln152, Asn177, Cys181, 214–221 (WGANMAEM), Met422, Gln426, Asn532, Lys580, Asp607, and 827–836 (TGRVLEHWHS) each bind Mo-bis(molybdopterin guanine dinucleotide). Residue Trp903 participates in substrate binding. The Mo-bis(molybdopterin guanine dinucleotide) site is built by Asn911 and Lys928.

The protein belongs to the prokaryotic molybdopterin-containing oxidoreductase family. NasA/NapA/NarB subfamily. Component of the periplasmic nitrate reductase NapAB complex composed of NapA and NapB. It depends on [4Fe-4S] cluster as a cofactor. The cofactor is Mo-bis(molybdopterin guanine dinucleotide). Post-translationally, predicted to be exported by the Tat system. The position of the signal peptide cleavage has not been experimentally proven.

Its subcellular location is the periplasm. The catalysed reaction is 2 Fe(II)-[cytochrome] + nitrate + 2 H(+) = 2 Fe(III)-[cytochrome] + nitrite + H2O. In terms of biological role, catalytic subunit of the periplasmic nitrate reductase complex NapAB. Receives electrons from NapB and catalyzes the reduction of nitrate to nitrite. This is Periplasmic nitrate reductase from Nautilia profundicola (strain ATCC BAA-1463 / DSM 18972 / AmH).